A 473-amino-acid polypeptide reads, in one-letter code: Photosystem II CP43 reaction center protein (473 aa).

The propeptide occupies 1 to 14 (MKTLYSLRRFYPVE). Position 15 is an N-acetylthreonine (Thr15). Residue Thr15 is modified to Phosphothreonine. Transmembrane regions (helical) follow at residues 69-93 (LFEVAHFVPEKPMYEQGLILLPHLA), 134-155 (LLGPETLEESFPFFGYVWKDRN), 178-200 (KALYFGGVYDTWAPGGGDVRKIT), 255-275 (KPFAWARRALVWSGEAYLSYS), and 291-312 (WFNNTAYPSEFYGPTGPEASQA). Glu367 lines the [CaMn4O5] cluster pocket. A helical transmembrane segment spans residues 447-471 (RARAAAAGFEKGIDRDFEPALSMTP).

The protein belongs to the PsbB/PsbC family. PsbC subfamily. As to quaternary structure, PSII is composed of 1 copy each of membrane proteins PsbA, PsbB, PsbC, PsbD, PsbE, PsbF, PsbH, PsbI, PsbJ, PsbK, PsbL, PsbM, PsbT, PsbX, PsbY, PsbZ, Psb30/Ycf12, at least 3 peripheral proteins of the oxygen-evolving complex and a large number of cofactors. It forms dimeric complexes. It depends on Binds multiple chlorophylls and provides some of the ligands for the Ca-4Mn-5O cluster of the oxygen-evolving complex. It may also provide a ligand for a Cl- that is required for oxygen evolution. PSII binds additional chlorophylls, carotenoids and specific lipids. as a cofactor.

The protein localises to the plastid. It localises to the chloroplast thylakoid membrane. Its function is as follows. One of the components of the core complex of photosystem II (PSII). It binds chlorophyll and helps catalyze the primary light-induced photochemical processes of PSII. PSII is a light-driven water:plastoquinone oxidoreductase, using light energy to abstract electrons from H(2)O, generating O(2) and a proton gradient subsequently used for ATP formation. The protein is Photosystem II CP43 reaction center protein of Oenothera argillicola (Appalachian evening primrose).